A 287-amino-acid chain; its full sequence is Shikimate dehydrogenase (NADP(+)) (287 aa).

Residues 18–20 (SYS) and threonine 66 each bind shikimate. Lysine 70 acts as the Proton acceptor in catalysis. Glutamate 82 serves as a coordination point for NADP(+). Residues asparagine 91 and aspartate 106 each contribute to the shikimate site. Residues 130 to 134 (GSGGA) and methionine 228 each bind NADP(+). Position 230 (tyrosine 230) interacts with shikimate. NADP(+) is bound at residue glycine 251.

The protein belongs to the shikimate dehydrogenase family. Homodimer.

It catalyses the reaction shikimate + NADP(+) = 3-dehydroshikimate + NADPH + H(+). It participates in metabolic intermediate biosynthesis; chorismate biosynthesis; chorismate from D-erythrose 4-phosphate and phosphoenolpyruvate: step 4/7. Involved in the biosynthesis of the chorismate, which leads to the biosynthesis of aromatic amino acids. Catalyzes the reversible NADPH linked reduction of 3-dehydroshikimate (DHSA) to yield shikimate (SA). This Chlorobium chlorochromatii (strain CaD3) protein is Shikimate dehydrogenase (NADP(+)).